Here is a 471-residue protein sequence, read N- to C-terminus: Methylenetetrahydrofolate--tRNA-(uracil-5-)-methyltransferase TrmFO (471 aa).

13–18 contributes to the FAD binding site; the sequence is GGGLAG.

It belongs to the MnmG family. TrmFO subfamily. FAD is required as a cofactor.

The protein localises to the cytoplasm. It carries out the reaction uridine(54) in tRNA + (6R)-5,10-methylene-5,6,7,8-tetrahydrofolate + NADH + H(+) = 5-methyluridine(54) in tRNA + (6S)-5,6,7,8-tetrahydrofolate + NAD(+). The enzyme catalyses uridine(54) in tRNA + (6R)-5,10-methylene-5,6,7,8-tetrahydrofolate + NADPH + H(+) = 5-methyluridine(54) in tRNA + (6S)-5,6,7,8-tetrahydrofolate + NADP(+). Its function is as follows. Catalyzes the folate-dependent formation of 5-methyl-uridine at position 54 (M-5-U54) in all tRNAs. This Azorhizobium caulinodans (strain ATCC 43989 / DSM 5975 / JCM 20966 / LMG 6465 / NBRC 14845 / NCIMB 13405 / ORS 571) protein is Methylenetetrahydrofolate--tRNA-(uracil-5-)-methyltransferase TrmFO.